The following is a 126-amino-acid chain: Large ribosomal subunit protein bL19 (126 aa).

Belongs to the bacterial ribosomal protein bL19 family.

Functionally, this protein is located at the 30S-50S ribosomal subunit interface and may play a role in the structure and function of the aminoacyl-tRNA binding site. The polypeptide is Large ribosomal subunit protein bL19 (Prochlorococcus marinus (strain MIT 9312)).